The chain runs to 145 residues: Histone H2B.10 (145 aa).

The span at 1-15 (MAKADKKPAEKKPAE) shows a compositional bias: basic and acidic residues. The interval 1 to 53 (MAKADKKPAEKKPAEKTPAAEPAAAAEKKPKAGKKLPKEPAGAGDKKKKRSKK) is disordered. An N6-methyllysine modification is found at lysine 3. N6-acetyllysine is present on residues lysine 6 and lysine 11. An N6,N6-dimethyllysine modification is found at lysine 12. Residues lysine 16, lysine 28, and lysine 34 each carry the N6-acetyllysine modification. The span at 16–25 (KTPAAEPAAA) shows a compositional bias: low complexity. Position 35 is an N6-acetyllysine; partial (lysine 35). Residue lysine 141 forms a Glycyl lysine isopeptide (Lys-Gly) (interchain with G-Cter in ubiquitin) linkage.

It belongs to the histone H2B family. As to quaternary structure, the nucleosome is a histone octamer containing two molecules each of H2A, H2B, H3 and H4 assembled in one H3-H4 heterotetramer and two H2A-H2B heterodimers. The octamer wraps approximately 147 bp of DNA. Interacts with ORTH2. In terms of processing, can be acetylated to form H2BK5ac, H2BK10ac, H2BK15ac, H2BK27ac, H2BK33ac and H2BK34ac. Post-translationally, dimethylated to form H2BK11me2. Monoubiquitinated by BRE1 to form H2BK143ub1 and deubiquitinated by UBP26. Required for heterochromatic histone H3 di- and trimethylation at H3K4me. May give a specific tag for epigenetic transcriptional activation.

The protein localises to the nucleus. Its subcellular location is the chromosome. Functionally, core component of nucleosome. Nucleosomes wrap and compact DNA into chromatin, limiting DNA accessibility to the cellular machineries which require DNA as a template. Histones thereby play a central role in transcription regulation, DNA repair, DNA replication and chromosomal stability. DNA accessibility is regulated via a complex set of post-translational modifications of histones, also called histone code, and nucleosome remodeling. This Arabidopsis thaliana (Mouse-ear cress) protein is Histone H2B.10.